The primary structure comprises 1076 residues: Nucleoporin NUP1 (1076 aa).

A compositionally biased stretch (low complexity) spans 1 to 11; that stretch reads MSSNTSSVMSS. The interval 1-39 is disordered; sequence MSSNTSSVMSSPRVEKRSFSSTLKSFFTNPNKKRPSSKK. N-acetylserine is present on Ser-2. A compositionally biased stretch (polar residues) spans 19 to 30; it reads FSSTLKSFFTNP. 2 positions are modified to phosphoserine: Ser-54 and Ser-161. 2 disordered regions span residues 143–183 and 224–260; these read SQSK…TNVG and KKDNKDKEGNAGGDQKTSENRNNIKSSISNGNLATGP. 2 stretches are compositionally biased toward polar residues: residues 154–170 and 243–260; these read LCTSSTPSPIKNGSCTR and NRNNIKSSISNGNLATGP. An FXF 1 repeat occupies 336–338; the sequence is FDF. The residue at position 381 (Thr-381) is a Phosphothreonine. Position 383 is a phosphoserine (Ser-383). One copy of the FXF 2 repeat lies at 384 to 386; sequence FNF. Residues 403-518 form a disordered region; that stretch reads TTLFNFGGKS…SFVFGASDKQ (116 aa). FXFG repeat units follow at residues 406 to 409 and 422 to 425; these read FNFG and FKFG. Over residues 426–439 the composition is skewed to basic and acidic residues; sequence KTSEKSENHTESDA. FXFG repeat units follow at residues 448 to 451 and 484 to 487; these read FSFG and FDFG. The segment covering 488 to 505 has biased composition (basic and acidic residues); it reads KTGDQKETKKGESEKDAS. FXFG repeat units lie at residues 510-513, 525-528, 543-546, and 571-574; these read FVFG and FTFG. The segment at 548 to 743 is disordered; sequence AATAKETHTK…SMKSTASTAA (196 aa). FXF repeat units follow at residues 591 to 593, 614 to 616, 636 to 638, and 657 to 659; these read FSF and FTF. Composition is skewed to polar residues over residues 634–649 and 658–667; these read PTFSFTEPAQKDSSVV and TFASSKTSQP. Ser-637 carries the phosphoserine modification. Residues 671-674 form an FXFG 9 repeat; sequence FSFG. An FXF 7 repeat occupies 689–691; the sequence is FSF. 2 FXFG repeats span residues 708–711 and 727–730; these read FTFG and FSFG. The span at 708–723 shows a compositional bias: low complexity; that stretch reads FTFGGSTTNNTTTTST. One copy of the FXF 8 repeat lies at 753–755; sequence FSF. An FXFG 12 repeat occupies 800 to 803; that stretch reads FSFG. 2 FXF repeats span residues 819 to 821 and 866 to 868; these read FSF and FGF. An FXFG 13 repeat occupies 885-888; it reads FNFG. The FXF 11 repeat unit spans residues 929 to 931; that stretch reads FNF. The tract at residues 940 to 979 is disordered; that stretch reads GGSVFNMNGNTNANTVFAGSNNQPHQSQTPSFNTNSSFTP. The span at 944–964 shows a compositional bias: polar residues; that stretch reads FNMNGNTNANTVFAGSNNQPH. The segment covering 965 to 979 has biased composition (low complexity); sequence QSQTPSFNTNSSFTP. FG repeat units lie at residues 1008–1009, 1027–1028, and 1038–1039; these read FG. The tract at residues 1025 to 1054 is disordered; sequence SIFGGAGGVPTTSFGQPQSAPNQMGMGTNN. Residues 1034–1045 are compositionally biased toward polar residues; the sequence is PTTSFGQPQSAP. The segment at 1040 to 1076 is interaction with KAP95; sequence QPQSAPNQMGMGTNNGMSMGGGVMANRKIARMRHSKR.

As to quaternary structure, component of the nuclear pore complex (NPC). NPC constitutes the exclusive means of nucleocytoplasmic transport. NPCs allow the passive diffusion of ions and small molecules and the active, nuclear transport receptor-mediated bidirectional transport of macromolecules such as proteins, RNAs, ribonucleoparticles (RNPs), and ribosomal subunits across the nuclear envelope. Due to its 8-fold rotational symmetry, all subunits are present with 8 copies or multiples thereof. Interacts through its FG repeats with nuclear transport receptors. Binds to the nuclear basket of the NPC through NUP60. Interacts with KAP122. Post-translationally, phosphorylated by CDC28.

It is found in the nucleus. It localises to the nuclear pore complex. The protein resides in the nucleus membrane. In terms of biological role, functions as a component of the nuclear pore complex (NPC). NPC components, collectively referred to as nucleoporins (NUPs), can play the role of both NPC structural components and of docking or interaction partners for transiently associated nuclear transport factors. Active directional transport is assured by both, a Phe-Gly (FG) repeat affinity gradient for these transport factors across the NPC and a transport cofactor concentration gradient across the nuclear envelope (GSP1 and GSP2 GTPases associated predominantly with GTP in the nucleus, with GDP in the cytoplasm). As one of the FG repeat nucleoporins NUP1 is involved in interactions with and guidance of nuclear transport receptors such as SRP1-KAP95 (importin alpha and beta) through the NPC. Like the closely related NUP2 it also plays an important role in disassembling and recycling SRP1-KAP95 to the cytoplasm after nuclear import. Upon entry of the heterotrimeric SRP1-KAP95-cargo complex in the nucleus, NUP1 binds through its C-terminus to KAP95, thus accelerating the release of KAP95 and, indirectly, of the nuclear localization signal (NLS)-containing cargo from the SRP1-KAP95-cargo complex. This is Nucleoporin NUP1 (NUP1) from Saccharomyces cerevisiae (strain ATCC 204508 / S288c) (Baker's yeast).